The chain runs to 432 residues: Glutamate-1-semialdehyde 2,1-aminomutase 2 (432 aa).

Residue Lys268 is modified to N6-(pyridoxal phosphate)lysine.

The protein belongs to the class-III pyridoxal-phosphate-dependent aminotransferase family. HemL subfamily. Homodimer. The cofactor is pyridoxal 5'-phosphate.

It localises to the cytoplasm. The enzyme catalyses (S)-4-amino-5-oxopentanoate = 5-aminolevulinate. Its pathway is porphyrin-containing compound metabolism; protoporphyrin-IX biosynthesis; 5-aminolevulinate from L-glutamyl-tRNA(Glu): step 2/2. The polypeptide is Glutamate-1-semialdehyde 2,1-aminomutase 2 (Listeria innocua serovar 6a (strain ATCC BAA-680 / CLIP 11262)).